A 638-amino-acid chain; its full sequence is NBPF family member NBPF4 (638 aa).

Coiled coils occupy residues 10 to 43 (SERA…EKFL) and 69 to 115 (DSVL…KLRE). The interval 157–285 (HLVHKLSPEN…VPPRHHDKSN (129 aa)) is disordered. Residues 165 to 179 (ENDEDEDEDEDDKDE) show a composition bias toward acidic residues. The Olduvai 1 domain maps to 174–261 (EDDKDEEVEK…EEEEALNIPP (88 aa)). Residues 192 to 202 (EVQKTEEKEVP) show a composition bias toward basic and acidic residues. The span at 214–226 (SNSHNPSNSNQPH) shows a compositional bias: low complexity. Basic and acidic residues-rich tracts occupy residues 232–251 (TFKE…HPHD) and 264–273 (QNDHEEEEGK). 2 consecutive Olduvai domains span residues 326–399 (EKQS…ALVD) and 400–503 (KIKK…SQAQ). The segment at 562–584 (GMKNPPQLEDDALEGSASNTQGR) is disordered.

Belongs to the NBPF family. As to expression, expressed in testis.

The protein resides in the cytoplasm. This chain is NBPF family member NBPF4, found in Homo sapiens (Human).